The sequence spans 578 residues: Adhesion G protein-coupled receptor A1 (578 aa).

At 1–22 (MTQWDLKTVLSLPQYPGEFLHP) the chain is on the extracellular side. Residues 23–43 (VVYACTAVMLLCLLASVITYI) traverse the membrane as a helical segment. The Cytoplasmic portion of the chain corresponds to 44–56 (LHQSAIRISRKGR). Residues 57-77 (HALLNFCFHAALTFTVFAGGI) traverse the membrane as a helical segment. Residues 78 to 87 (NRTQHPILCQ) are Extracellular-facing. Residues 88 to 108 (AVGIALHYSTLSTMLWIGVTA) form a helical membrane-spanning segment. Over 109–137 (RNIYKQVTKKALPCPGADQPPYPKQPLLR) the chain is Cytoplasmic. A helical transmembrane segment spans residues 138 to 158 (FYLISGGVPFIICGVTAATNI). Residues 159–178 (RNYGTEDEDVAYCWMAWEPS) are Extracellular-facing. The helical transmembrane segment at 179–199 (LGAFYGPAAFIALVTCVYFLC) threads the bilayer. Over 200 to 262 (TYVQLRRHPE…NEHSFKAQLR (63 aa)) the chain is Cytoplasmic. Residues 216–236 (ERTEEQQRLAVPESGHRHGVR) are disordered. Residues 263-283 (AAAFTLFLFTATWTFGALAVS) form a helical membrane-spanning segment. Topologically, residues 284-289 (QGHFLD) are extracellular. The helical transmembrane segment at 290–310 (MIFSCLYGAFCVTLGLFVLIH) threads the bilayer. Disordered regions lie at residues 463–486 (PSSL…EGPM) and 537–578 (SLPF…ETTV). Residues 469 to 481 (SPHSSRSESPTSS) show a composition bias toward low complexity. Residues 537–548 (SLPFGGPSQNGL) show a composition bias toward polar residues.

The protein belongs to the G-protein coupled receptor 2 family. Adhesion G-protein coupled receptor (ADGR) subfamily. In terms of tissue distribution, predominantly expressed in CNS.

It localises to the membrane. In Mus musculus (Mouse), this protein is Adhesion G protein-coupled receptor A1.